We begin with the raw amino-acid sequence, 356 residues long: D-alanine--D-alanine ligase (356 aa).

The ATP-grasp domain occupies Lys134–Glu339. His167–Glu222 is an ATP binding site. Mg(2+)-binding residues include Asp293, Glu306, and Asn308.

The protein belongs to the D-alanine--D-alanine ligase family. The cofactor is Mg(2+). Mn(2+) is required as a cofactor.

The protein localises to the cytoplasm. The catalysed reaction is 2 D-alanine + ATP = D-alanyl-D-alanine + ADP + phosphate + H(+). The protein operates within cell wall biogenesis; peptidoglycan biosynthesis. Its function is as follows. Cell wall formation. This Staphylococcus saprophyticus subsp. saprophyticus (strain ATCC 15305 / DSM 20229 / NCIMB 8711 / NCTC 7292 / S-41) protein is D-alanine--D-alanine ligase.